The following is a 419-amino-acid chain: tRNA(Ile)-lysidine synthase (419 aa).

An ATP-binding site is contributed by 31 to 36 (SGGGDS).

This sequence belongs to the tRNA(Ile)-lysidine synthase family.

It localises to the cytoplasm. It catalyses the reaction cytidine(34) in tRNA(Ile2) + L-lysine + ATP = lysidine(34) in tRNA(Ile2) + AMP + diphosphate + H(+). Ligates lysine onto the cytidine present at position 34 of the AUA codon-specific tRNA(Ile) that contains the anticodon CAU, in an ATP-dependent manner. Cytidine is converted to lysidine, thus changing the amino acid specificity of the tRNA from methionine to isoleucine. In Ruegeria pomeroyi (strain ATCC 700808 / DSM 15171 / DSS-3) (Silicibacter pomeroyi), this protein is tRNA(Ile)-lysidine synthase.